The sequence spans 1206 residues: Pre-mRNA-splicing factor prp12 (1206 aa).

This sequence belongs to the RSE1 family. In terms of assembly, belongs to the 40S cdc5-associated complex (or cwf complex), a spliceosome sub-complex reminiscent of a late-stage spliceosome composed of the U2, U5 and U6 snRNAs and at least brr2, cdc5, cwf2/prp3, cwf3/syf1, cwf4/syf3, cwf5/ecm2, spp42/cwf6, cwf7/spf27, cwf8, cwf9, cwf10, cwf11, cwf12, prp45/cwf13, cwf14, cwf15, cwf16, cwf17, cwf18, cwf19, cwf20, cwf21, cwf22, cwf23, cwf24, cwf25, cwf26, cyp7/cwf27, cwf28, cwf29/ist3, lea1, msl1, prp5/cwf1, prp10, prp12/sap130, prp17, prp22, sap61, sap62, sap114, sap145, slu7, smb1, smd1, smd3, smf1, smg1 and syf2.

The protein resides in the nucleus. Functionally, involved in mRNA splicing and G2/M transition. The polypeptide is Pre-mRNA-splicing factor prp12 (prp12) (Schizosaccharomyces pombe (strain 972 / ATCC 24843) (Fission yeast)).